A 275-amino-acid chain; its full sequence is Large ribosomal subunit protein uL2 (275 aa).

The span at 28-38 (RPYEPLVETKS) shows a compositional bias: basic and acidic residues. 2 disordered regions span residues 28-53 (RPYE…TTRH) and 222-275 (GVAM…RSAK). The span at 254-275 (KGHKTRKNKRTDKMIVRRRSAK) shows a compositional bias: basic residues.

This sequence belongs to the universal ribosomal protein uL2 family. As to quaternary structure, part of the 50S ribosomal subunit. Forms a bridge to the 30S subunit in the 70S ribosome.

Functionally, one of the primary rRNA binding proteins. Required for association of the 30S and 50S subunits to form the 70S ribosome, for tRNA binding and peptide bond formation. It has been suggested to have peptidyltransferase activity; this is somewhat controversial. Makes several contacts with the 16S rRNA in the 70S ribosome. In Marinobacter nauticus (strain ATCC 700491 / DSM 11845 / VT8) (Marinobacter aquaeolei), this protein is Large ribosomal subunit protein uL2.